A 278-amino-acid chain; its full sequence is Biotin synthase (278 aa).

Residues 1 to 227 form the Radical SAM core domain; that stretch reads MQIMLCAISN…NAHIMVAGGR (227 aa). [4Fe-4S] cluster-binding residues include Cys16, Cys20, and Cys23. [2Fe-2S] cluster contacts are provided by Cys60, Cys95, and Cys153.

It belongs to the radical SAM superfamily. Biotin synthase family. As to quaternary structure, homodimer. Requires [4Fe-4S] cluster as cofactor. [2Fe-2S] cluster is required as a cofactor.

It catalyses the reaction (4R,5S)-dethiobiotin + (sulfur carrier)-SH + 2 reduced [2Fe-2S]-[ferredoxin] + 2 S-adenosyl-L-methionine = (sulfur carrier)-H + biotin + 2 5'-deoxyadenosine + 2 L-methionine + 2 oxidized [2Fe-2S]-[ferredoxin]. It participates in cofactor biosynthesis; biotin biosynthesis; biotin from 7,8-diaminononanoate: step 2/2. Its function is as follows. Catalyzes the conversion of dethiobiotin (DTB) to biotin by the insertion of a sulfur atom into dethiobiotin via a radical-based mechanism. The polypeptide is Biotin synthase (Campylobacter lari (strain RM2100 / D67 / ATCC BAA-1060)).